The chain runs to 252 residues: uncharacterized protein (252 aa).

Transmembrane regions (helical) follow at residues 5–25 (LTSL…IVSF), 29–49 (LALV…GTFI), 61–81 (IAGI…GLYF), 141–161 (ILPS…PGII), 179–199 (WLLL…SKWW), and 217–237 (IGWI…LIQF).

This sequence belongs to the DedA family.

The protein resides in the cell membrane. This is an uncharacterized protein from Buchnera aphidicola subsp. Schizaphis graminum (strain Sg).